Here is a 386-residue protein sequence, read N- to C-terminus: Succinate--CoA ligase [ADP-forming] subunit beta (386 aa).

In terms of domain architecture, ATP-grasp spans 9–244 (KEILRKYGVP…HDEEDPLETR (236 aa)). Residues Lys-46, 53–55 (GRG), Glu-99, Cys-102, and Glu-107 contribute to the ATP site. Mg(2+) contacts are provided by Asn-199 and Asp-213. Residues Asn-264 and 321 to 323 (GIM) contribute to the substrate site.

Belongs to the succinate/malate CoA ligase beta subunit family. Heterotetramer of two alpha and two beta subunits. Requires Mg(2+) as cofactor.

It carries out the reaction succinate + ATP + CoA = succinyl-CoA + ADP + phosphate. The catalysed reaction is GTP + succinate + CoA = succinyl-CoA + GDP + phosphate. It participates in carbohydrate metabolism; tricarboxylic acid cycle; succinate from succinyl-CoA (ligase route): step 1/1. Succinyl-CoA synthetase functions in the citric acid cycle (TCA), coupling the hydrolysis of succinyl-CoA to the synthesis of either ATP or GTP and thus represents the only step of substrate-level phosphorylation in the TCA. The beta subunit provides nucleotide specificity of the enzyme and binds the substrate succinate, while the binding sites for coenzyme A and phosphate are found in the alpha subunit. The chain is Succinate--CoA ligase [ADP-forming] subunit beta from Rickettsia peacockii (strain Rustic).